The sequence spans 108 residues: MVKLRLKRIGKKQAPFYRIVAADSRVNRNGQYIELVGTFNPLKDEVKIDKELTLKWLNNGAQPTDTVRSLLSKQGILKALHESKFSKNTQTENKKPVSKKTTKKSKDN.

The tract at residues 82–108 is disordered; the sequence is ESKFSKNTQTENKKPVSKKTTKKSKDN. Positions 96 to 108 are enriched in basic residues; that stretch reads PVSKKTTKKSKDN.

It belongs to the bacterial ribosomal protein bS16 family.

The protein is Small ribosomal subunit protein bS16 of Mycoplasma capricolum subsp. capricolum (strain California kid / ATCC 27343 / NCTC 10154).